The chain runs to 448 residues: MSQAETTKLPYKVKDISLADYGRKEIELAENEMPGLMALRSKYGAEKPLKGARIAGCLHMTIQTAVLIETLVELGAEVTWSSCNIFSTQDHAAAAIAAAGIPVYAWKGMTEEEFDWCIEQTLDFPSGEKLNMILDDGGDLTAMVHDRFPELLDNIYGISEETTAGVHRLEVLNKSGKLRVPSINVNDSATKSKFDNLYGCRESLADGVKRATDVMLAGKVAVVCGYGDVGKGCAHSLKSYGCRVLVTEIDPINALQAAMEGFEVTTMEEACKEGRLYVTTTGNKDIILGEHMKQMPNDAILCNIGHFDTEIDIAWAEQQVADGKATVSEIKPSDIGAVDRFTFNDTGRSIIILAKGRLVNLGCATGHPSFVMSSSFTNQVLAQMELYQNRDNDKYGVQVYLLPKELDEEVARLHLEAIGVKLTKLTQEQADYIGVPVEGPYKPNHYRY.

Thr-61, Asp-136, and Glu-161 together coordinate substrate. 162–164 (TTA) serves as a coordination point for NAD(+). Positions 191 and 195 each coordinate substrate. Residues Asn-196, 225 to 230 (GYGDVG), Glu-248, Asn-283, 304 to 306 (IGH), and Asn-360 contribute to the NAD(+) site.

Belongs to the adenosylhomocysteinase family. NAD(+) serves as cofactor.

It localises to the cytoplasm. The enzyme catalyses S-adenosyl-L-homocysteine + H2O = L-homocysteine + adenosine. It functions in the pathway amino-acid biosynthesis; L-homocysteine biosynthesis; L-homocysteine from S-adenosyl-L-homocysteine: step 1/1. Functionally, may play a key role in the regulation of the intracellular concentration of adenosylhomocysteine. In Rhodopirellula baltica (strain DSM 10527 / NCIMB 13988 / SH1), this protein is Adenosylhomocysteinase.